The primary structure comprises 354 residues: Membrane progestin receptor beta (354 aa).

The Cytoplasmic portion of the chain corresponds to 1 to 75 (MTTAILERLS…FFSLFQKHNE (75 aa)). Residues 76–96 (VVNVWTHLLAALAVLLRFWAF) form a helical membrane-spanning segment. The Extracellular segment spans residues 97–111 (AEAEALPWASTHSLP). The helical transmembrane segment at 112–132 (LLLFILSSITYLTCSLLAHLL) threads the bilayer. Over 133 to 174 (QSKSELSHYTFYFVDYVGVSVYQYGSALAHFFYSSDQAWYDR) the chain is Cytoplasmic. Residues 175 to 195 (FWLFFLPAAAFCGWLSCAGCC) form a helical membrane-spanning segment. The Extracellular portion of the chain corresponds to 196–213 (YAKYRYRRPYPVMRKICQ). Residues 214–234 (VVPAGLAFILDISPVAHRVAL) traverse the membrane as a helical segment. Over 235–243 (CHLAGCQEQ) the chain is Cytoplasmic. The helical transmembrane segment at 244–264 (AAWYHTLQILFFLVSAYFFSC) threads the bilayer. At 265–283 (PVPEKYFPGSCDIVGHGHQ) the chain is on the extracellular side. The helical transmembrane segment at 284 to 304 (IFHAFLSICTLSQLEAILLDY) threads the bilayer. The Cytoplasmic segment spans residues 305–319 (QGRQEIFLQRHGPLS). Residues 320 to 340 (VHMACLSFFFLAACSAATAAL) form a helical membrane-spanning segment. Residues 341–354 (LRHKVKARLTKKDS) lie on the Extracellular side of the membrane.

This sequence belongs to the ADIPOR family. In terms of tissue distribution, highly expressed in the hypothalamus. Also expressed in spinal cord, kidney and testis.

It localises to the cell membrane. Functionally, plasma membrane progesterone (P4) receptor coupled to G proteins. Seems to act through a G(i) mediated pathway. May be involved in oocyte maturation. Also binds dehydroepiandrosterone (DHEA), pregnanolone, pregnenolone and allopregnanolone. In Homo sapiens (Human), this protein is Membrane progestin receptor beta.